Consider the following 134-residue polypeptide: MGRDTIAEIITSIRNADMDRKRVVRIASTNITENIVRILLREGFIENVRKHREKNKNFFVLTLRHRRNRKRPYRNIFNLKRISRPGLRIYSNYQRIPKILGGMGVVILSTSRGIMTDREARLEGIGGEILCYIW.

Belongs to the universal ribosomal protein uS8 family. As to quaternary structure, part of the 30S ribosomal subunit.

The protein localises to the plastid. Its subcellular location is the chloroplast. Its function is as follows. One of the primary rRNA binding proteins, it binds directly to 16S rRNA central domain where it helps coordinate assembly of the platform of the 30S subunit. The protein is Small ribosomal subunit protein uS8c (rps8) of Ipomoea purpurea (Common morning glory).